The following is a 102-amino-acid chain: Large ribosomal subunit protein bL21 (102 aa).

The protein belongs to the bacterial ribosomal protein bL21 family. As to quaternary structure, part of the 50S ribosomal subunit. Contacts protein L20.

In terms of biological role, this protein binds to 23S rRNA in the presence of protein L20. The polypeptide is Large ribosomal subunit protein bL21 (Oceanobacillus iheyensis (strain DSM 14371 / CIP 107618 / JCM 11309 / KCTC 3954 / HTE831)).